A 347-amino-acid chain; its full sequence is Phosphoribosylformylglycinamidine cyclo-ligase (347 aa).

Belongs to the AIR synthase family.

It localises to the cytoplasm. The catalysed reaction is 2-formamido-N(1)-(5-O-phospho-beta-D-ribosyl)acetamidine + ATP = 5-amino-1-(5-phospho-beta-D-ribosyl)imidazole + ADP + phosphate + H(+). The protein operates within purine metabolism; IMP biosynthesis via de novo pathway; 5-amino-1-(5-phospho-D-ribosyl)imidazole from N(2)-formyl-N(1)-(5-phospho-D-ribosyl)glycinamide: step 2/2. The chain is Phosphoribosylformylglycinamidine cyclo-ligase from Bacillus cytotoxicus (strain DSM 22905 / CIP 110041 / 391-98 / NVH 391-98).